A 334-amino-acid polypeptide reads, in one-letter code: Protein RecA (334 aa).

ATP is bound at residue Gly65–Thr72.

It belongs to the RecA family.

It is found in the cytoplasm. Its function is as follows. Can catalyze the hydrolysis of ATP in the presence of single-stranded DNA, the ATP-dependent uptake of single-stranded DNA by duplex DNA, and the ATP-dependent hybridization of homologous single-stranded DNAs. It interacts with LexA causing its activation and leading to its autocatalytic cleavage. This chain is Protein RecA, found in Ureaplasma parvum serovar 3 (strain ATCC 27815 / 27 / NCTC 11736).